Consider the following 219-residue polypeptide: NAD(P)H-quinone oxidoreductase subunit I (219 aa).

4Fe-4S ferredoxin-type domains follow at residues 55–84 and 95–124; these read GRIHYEFDKCIACEVCVRVCPINLPVVDWV and RNYSIDFGVCIFCGNCVEYCPTNCLSMTEE. The [4Fe-4S] cluster site is built by C64, C67, C70, C74, C104, C107, C110, and C114.

This sequence belongs to the complex I 23 kDa subunit family. In terms of assembly, NDH-1 is composed of at least 11 different subunits. Requires [4Fe-4S] cluster as cofactor.

The protein localises to the cellular thylakoid membrane. The enzyme catalyses a plastoquinone + NADH + (n+1) H(+)(in) = a plastoquinol + NAD(+) + n H(+)(out). It carries out the reaction a plastoquinone + NADPH + (n+1) H(+)(in) = a plastoquinol + NADP(+) + n H(+)(out). NDH-1 shuttles electrons from an unknown electron donor, via FMN and iron-sulfur (Fe-S) centers, to quinones in the respiratory and/or the photosynthetic chain. The immediate electron acceptor for the enzyme in this species is believed to be plastoquinone. Couples the redox reaction to proton translocation, and thus conserves the redox energy in a proton gradient. The protein is NAD(P)H-quinone oxidoreductase subunit I of Prochlorococcus marinus (strain SARG / CCMP1375 / SS120).